The primary structure comprises 436 residues: ATP-dependent RNA helicase SUB2 (436 aa).

Residues 1 to 16 (MSAEEDLIDYSDEELN) show a composition bias toward acidic residues. The tract at residues 1–33 (MSAEEDLIDYSDEELNTNETAAPAADSNGKKGE) is disordered. Residues 52 to 80 (TGFRDFLLKPELLRAIGDCGFEHPSEVQQ) carry the Q motif motif. The Helicase ATP-binding domain maps to 83 to 258 (IPQAMLGGDI…KKFMQNPTEH (176 aa)). 96–103 (AKSGLGKT) is a binding site for ATP. The short motif at 205–208 (DECD) is the DEAD box element. Positions 270 to 431 (GLQQYFVALE…EFPKDGIDAS (162 aa)) constitute a Helicase C-terminal domain.

This sequence belongs to the DEAD box helicase family. DECD subfamily.

The protein localises to the nucleus. It carries out the reaction ATP + H2O = ADP + phosphate + H(+). ATP-binding RNA helicase involved in transcription elongation and required for the export of mRNA out of the nucleus. SUB2 also plays a role in pre-mRNA splicing and spliceosome assembly. May be involved in rDNA and telomeric silencing, and maintenance of genome integrity. This chain is ATP-dependent RNA helicase SUB2 (SUB2), found in Pyricularia oryzae (strain 70-15 / ATCC MYA-4617 / FGSC 8958) (Rice blast fungus).